We begin with the raw amino-acid sequence, 502 residues long: Maturase K (502 aa).

The protein belongs to the intron maturase 2 family. MatK subfamily.

The protein resides in the plastid. It is found in the chloroplast. In terms of biological role, usually encoded in the trnK tRNA gene intron. Probably assists in splicing its own and other chloroplast group II introns. The chain is Maturase K from Vaccinium vitis-idaea (Mountain cranberry).